The sequence spans 359 residues: MADKIKVMIVDDSALVRQVVAQALASDPGIEVTDVASDPIFALQKMKVRWPDVLVIDIEMPRMDGITFLKKIMAEHPTPTVICSSLAEKGAQATFEALAAGAVSIITKPKIGLKSFLEDASNDIVQAVRSAARANLRALSASANPAINRPKLSADAMLSTGSHRALERTTDQLVAIGTSTGGTQALEAVLTRLPATAPGIVIVQHMPEKFTAMFAERLDGLCQIEVREARNGDRVLPGLALIAPGGRHMMLKRNGAQYVVDVADGPLINRHKPSVDVLFRSVAKFAGANALGIIMTGMGDDGARGMKEMHDAGAKTIAQDESSCVVFGMPKEAIKLGGVDQTMPLQQIPGAIVGYGKSC.

Residues K6–D123 form the Response regulatory domain. 4-aspartylphosphate is present on D57. A CheB-type methylesterase domain is found at E167–C359. Residues S179, H205, and D301 contribute to the active site.

The protein belongs to the CheB family. In terms of processing, phosphorylated by CheA. Phosphorylation of the N-terminal regulatory domain activates the methylesterase activity.

The protein resides in the cytoplasm. It carries out the reaction [protein]-L-glutamate 5-O-methyl ester + H2O = L-glutamyl-[protein] + methanol + H(+). It catalyses the reaction L-glutaminyl-[protein] + H2O = L-glutamyl-[protein] + NH4(+). In terms of biological role, involved in chemotaxis. Part of a chemotaxis signal transduction system that modulates chemotaxis in response to various stimuli. Catalyzes the demethylation of specific methylglutamate residues introduced into the chemoreceptors (methyl-accepting chemotaxis proteins or MCP) by CheR. Also mediates the irreversible deamidation of specific glutamine residues to glutamic acid. The protein is Protein-glutamate methylesterase/protein-glutamine glutaminase 2 of Dechloromonas aromatica (strain RCB).